The following is a 165-amino-acid chain: Anaphase-promoting complex subunit 11 (165 aa).

The RING-type; atypical zinc finger occupies 52–95 (CPSCKFPGDQCPLVIGLCHHNFHDHCIYRWLDTPTSKGLCPMCR).

The APC/C is composed of at least 13 subunits that stay tightly associated throughout the cell cycle: APC1, APC2, APC4, APC5, APC9, APC11, CDC16, CDC23, CDC26, CDC27, DOC1, MND2 and SWM1.

The protein operates within protein modification; protein ubiquitination. Its function is as follows. Probably catalytic subunit of the anaphase promoting complex/cyclosome (APC/C), a cell cycle-regulated E3 ubiquitin-protein ligase complex that controls progression through mitosis and the G1 phase of the cell cycle. The APC/C is thought to confer substrate specificity and, in the presence of ubiquitin-conjugating E2 enzymes, it catalyzes the formation of protein-ubiquitin conjugates that are subsequently degraded by the 26S proteasome. In early mitosis, the APC/C is activated by CDC20 and targets securin PDS1, the B-type cyclin CLB5, and other anaphase inhibitory proteins for proteolysis, thereby triggering the separation of sister chromatids at the metaphase-to-anaphase transition. In late mitosis and in G1, degradation of CLB5 allows activation of the APC/C by CDH1, which is needed to destroy CDC20 and the B-type cyclin CLB2 to allow exit from mitosis and creating the low CDK state necessary for cytokinesis and for reforming prereplicative complexes in G1 prior to another round of replication. APC11 is required to recruit the ubiquitin-conjugating enzyme E2 to the APC/C. The polypeptide is Anaphase-promoting complex subunit 11 (APC11) (Saccharomyces cerevisiae (strain ATCC 204508 / S288c) (Baker's yeast)).